The chain runs to 504 residues: 26S proteasome non-ATPase regulatory subunit 5 (504 aa).

N-acetylalanine is present on Ala-2.

This sequence belongs to the proteasome subunit S5B/HSM3 family. Interacts with PSMC1, PSMC2, PSMD1 and PSMD6. Part of transient complex containing PSMD5, PSMC2, PSMC1 and PSMD2 formed during the assembly of the 26S proteasome.

Functionally, acts as a chaperone during the assembly of the 26S proteasome, specifically of the base subcomplex of the PA700/19S regulatory complex (RC). In the initial step of the base subcomplex assembly is part of an intermediate PSMD5:PSMC2:PSMC1:PSMD2 module which probably assembles with a PSMD10:PSMC4:PSMC5:PAAF1 module followed by dissociation of PSMD5. The sequence is that of 26S proteasome non-ATPase regulatory subunit 5 (PSMD5) from Homo sapiens (Human).